A 320-amino-acid polypeptide reads, in one-letter code: uncharacterized protein (320 aa).

A run of 7 helical transmembrane segments spans residues 107-127 (LSKE…AGIY), 131-151 (VALL…IALS), 169-189 (LIAE…YLPI), 200-220 (ITLD…GSLS), 228-248 (IAVG…FGLL), 260-280 (ALIL…VIFS), and 299-319 (TLYA…LIIY).

The protein localises to the cell membrane. This is an uncharacterized protein from Methanocaldococcus jannaschii (strain ATCC 43067 / DSM 2661 / JAL-1 / JCM 10045 / NBRC 100440) (Methanococcus jannaschii).